Here is an 87-residue protein sequence, read N- to C-terminus: Down syndrome critical region protein 10 (87 aa).

Expressed in placenta and testis.

This Homo sapiens (Human) protein is Down syndrome critical region protein 10 (DSCR10).